The following is a 282-amino-acid chain: Bifunctional protein FolD (282 aa).

NADP(+) contacts are provided by residues 164–166 and Ser-189; that span reads GRS.

This sequence belongs to the tetrahydrofolate dehydrogenase/cyclohydrolase family. Homodimer.

It catalyses the reaction (6R)-5,10-methylene-5,6,7,8-tetrahydrofolate + NADP(+) = (6R)-5,10-methenyltetrahydrofolate + NADPH. It carries out the reaction (6R)-5,10-methenyltetrahydrofolate + H2O = (6R)-10-formyltetrahydrofolate + H(+). It functions in the pathway one-carbon metabolism; tetrahydrofolate interconversion. Catalyzes the oxidation of 5,10-methylenetetrahydrofolate to 5,10-methenyltetrahydrofolate and then the hydrolysis of 5,10-methenyltetrahydrofolate to 10-formyltetrahydrofolate. The protein is Bifunctional protein FolD of Lactobacillus gasseri (strain ATCC 33323 / DSM 20243 / BCRC 14619 / CIP 102991 / JCM 1131 / KCTC 3163 / NCIMB 11718 / NCTC 13722 / AM63).